The primary structure comprises 631 residues: 1-deoxy-D-xylulose-5-phosphate synthase (631 aa).

Thiamine diphosphate contacts are provided by residues His-72 and 113 to 115 (GHA). Residue Asp-144 coordinates Mg(2+). Residues 145-146 (GA), Asn-174, Tyr-287, and Glu-370 each bind thiamine diphosphate. Asn-174 contributes to the Mg(2+) binding site.

This sequence belongs to the transketolase family. DXPS subfamily. Homodimer. Requires Mg(2+) as cofactor. Thiamine diphosphate serves as cofactor.

It catalyses the reaction D-glyceraldehyde 3-phosphate + pyruvate + H(+) = 1-deoxy-D-xylulose 5-phosphate + CO2. It participates in metabolic intermediate biosynthesis; 1-deoxy-D-xylulose 5-phosphate biosynthesis; 1-deoxy-D-xylulose 5-phosphate from D-glyceraldehyde 3-phosphate and pyruvate: step 1/1. Catalyzes the acyloin condensation reaction between C atoms 2 and 3 of pyruvate and glyceraldehyde 3-phosphate to yield 1-deoxy-D-xylulose-5-phosphate (DXP). This Prochlorococcus marinus (strain MIT 9515) protein is 1-deoxy-D-xylulose-5-phosphate synthase.